The chain runs to 186 residues: Oligoribonuclease (186 aa).

The 164-residue stretch at 12–175 (LIWIDLEMTG…DDIKDSIKEL (164 aa)) folds into the Exonuclease domain. The active site involves Y133.

The protein belongs to the oligoribonuclease family.

It localises to the cytoplasm. Its function is as follows. 3'-to-5' exoribonuclease specific for small oligoribonucleotides. The chain is Oligoribonuclease from Wigglesworthia glossinidia brevipalpis.